We begin with the raw amino-acid sequence, 361 residues long: Phospho-N-acetylmuramoyl-pentapeptide-transferase (361 aa).

The next 10 membrane-spanning stretches (helical) occupy residues 21–41 (YITL…FLVG), 73–93 (TMGG…WADL), 97–117 (FVWV…VDDW), 134–154 (YFWQ…TATV), 168–188 (LVLP…IVGT), 200–220 (GLAI…AYVA), 237–257 (AGEL…FLWF), 264–284 (VFMG…VAVI), 289–309 (IVLF…MLQV), and 338–358 (QVVV…LSTL).

The protein belongs to the glycosyltransferase 4 family. MraY subfamily. It depends on Mg(2+) as a cofactor.

Its subcellular location is the cell inner membrane. It carries out the reaction UDP-N-acetyl-alpha-D-muramoyl-L-alanyl-gamma-D-glutamyl-meso-2,6-diaminopimeloyl-D-alanyl-D-alanine + di-trans,octa-cis-undecaprenyl phosphate = di-trans,octa-cis-undecaprenyl diphospho-N-acetyl-alpha-D-muramoyl-L-alanyl-D-glutamyl-meso-2,6-diaminopimeloyl-D-alanyl-D-alanine + UMP. Its pathway is cell wall biogenesis; peptidoglycan biosynthesis. Functionally, catalyzes the initial step of the lipid cycle reactions in the biosynthesis of the cell wall peptidoglycan: transfers peptidoglycan precursor phospho-MurNAc-pentapeptide from UDP-MurNAc-pentapeptide onto the lipid carrier undecaprenyl phosphate, yielding undecaprenyl-pyrophosphoryl-MurNAc-pentapeptide, known as lipid I. The polypeptide is Phospho-N-acetylmuramoyl-pentapeptide-transferase (Methylobacillus flagellatus (strain ATCC 51484 / DSM 6875 / VKM B-1610 / KT)).